The sequence spans 117 residues: Ig heavy chain V region RF (117 aa).

A signal peptide spans 1–19 (MNFGLRLIFLVLVLKGVLC). The interval 20–49 (DVKLVESGGGLVKLGGSLKLSCAASGFTFS) is framework-1. Cysteines 41 and 115 form a disulfide. Positions 50–54 (SYYMS) are complementarity-determining-1. The segment at 55–68 (WVRQTPEKRLELVA) is framework-2. Residues 69–85 (AINSNGGSTYYPDTVKG) form a complementarity-determining-2 region. The interval 86-117 (RFTISRDNAKNTLYLQMSSLKSEDTALYYCAR) is framework-3.

This chain is Ig heavy chain V region RF, found in Mus musculus (Mouse).